A 266-amino-acid polypeptide reads, in one-letter code: Type II iodothyronine deiodinase (266 aa).

The Lumenal portion of the chain corresponds to 1–9; it reads MGLLSVDLL. Residues 10–34 form a helical; Signal-anchor for type III membrane protein membrane-spanning segment; sequence ITLQILPVFFSNCLFLALYDSVILL. Residues 35-266 lie on the Cytoplasmic side of the membrane; that stretch reads KHVALLLSRS…KNFSKRUILD (232 aa). The active site involves U130. Residues U130 and U263 are each a non-standard amino acid (selenocysteine).

The protein belongs to the iodothyronine deiodinase family. As to quaternary structure, predominantly monomer. Can form homodimers but homodimerization is not essential for enzyme activity. Interacts with USP20 and USP33. Interacts with MARCHF6. Ubiquitinated by MARCHF6, leading to its degradation by the proteasome. Deubiquitinated by USP20 and USP33. In terms of tissue distribution, expressed in mammary gland and in brain.

The protein resides in the endoplasmic reticulum membrane. It catalyses the reaction 3,3',5-triiodo-L-thyronine + iodide + A + H(+) = L-thyroxine + AH2. It carries out the reaction 3,3'-diiodo-L-thyronine + iodide + A + H(+) = 3,3',5'-triiodo-L-thyronine + AH2. The catalysed reaction is 3'-iodo-L-thyronine + iodide + A + H(+) = 3',5'-diiodo-L-thyronine + AH2. The enzyme catalyses 3,3'-diiodothyronamine + iodide + A + H(+) = 3,3',5'-triiodothyronamine + AH2. It catalyses the reaction 3'-iodothyronamine + iodide + A + H(+) = 3',5'-diiodothyronamine + AH2. Its function is as follows. Plays a crucial role in the metabolism of thyroid hormones (TH) and has specific roles in TH activation and inactivation by deiodination. Catalyzes the deiodination of L-thyroxine (T4) to 3,5,3'-triiodothyronine (T3) and 3,3',5'-triiodothyronine (rT3) to 3,3'-diiodothyronine (3,3'-T2) via outer-ring deiodination (ORD). Catalyzes the deiodination of 3',5'-diiodothyronine (3',5'-T2) to 3'-monoiodothyronine (3'-T1) via ORD. Catalyzes the phenolic ring deiodinations of 3,3',5'-triiodothyronamine and 3',5'- diiodothyronamine. This Mus musculus (Mouse) protein is Type II iodothyronine deiodinase (Dio2).